Reading from the N-terminus, the 159-residue chain is Cytochrome c-type biogenesis protein CcmE (159 aa).

At 1–7 (MTPRQRR) the chain is on the cytoplasmic side. Residues 8 to 28 (LGMLLAALACAGIALALVLNA) traverse the membrane as a helical; Signal-anchor for type II membrane protein segment. Residues 29–159 (FRSNLVFFFS…LAEGERETQR (131 aa)) are Periplasmic-facing. H123 and Y127 together coordinate heme.

This sequence belongs to the CcmE/CycJ family.

Its subcellular location is the cell inner membrane. In terms of biological role, heme chaperone required for the biogenesis of c-type cytochromes. Transiently binds heme delivered by CcmC and transfers the heme to apo-cytochromes in a process facilitated by CcmF and CcmH. This chain is Cytochrome c-type biogenesis protein CcmE, found in Cupriavidus pinatubonensis (strain JMP 134 / LMG 1197) (Cupriavidus necator (strain JMP 134)).